Consider the following 260-residue polypeptide: Hydroxyethylthiazole kinase 1 (260 aa).

Met39 serves as a coordination point for substrate. ATP-binding residues include Arg115 and Thr160. Residue Gly187 participates in substrate binding.

This sequence belongs to the Thz kinase family. The cofactor is Mg(2+).

It catalyses the reaction 5-(2-hydroxyethyl)-4-methylthiazole + ATP = 4-methyl-5-(2-phosphooxyethyl)-thiazole + ADP + H(+). Its pathway is cofactor biosynthesis; thiamine diphosphate biosynthesis; 4-methyl-5-(2-phosphoethyl)-thiazole from 5-(2-hydroxyethyl)-4-methylthiazole: step 1/1. In terms of biological role, catalyzes the phosphorylation of the hydroxyl group of 4-methyl-5-beta-hydroxyethylthiazole (THZ). In Streptococcus pneumoniae (strain ATCC 700669 / Spain 23F-1), this protein is Hydroxyethylthiazole kinase 1.